Here is a 240-residue protein sequence, read N- to C-terminus: Ribosomal RNA large subunit methyltransferase E (240 aa).

Residues 1–13 (MAKKPGSQNTSGR) show a composition bias toward polar residues. The interval 1-20 (MAKKPGSQNTSGRGQRDLKV) is disordered. The S-adenosyl-L-methionine site is built by G85, W87, D113, D129, and D153. Residue K193 is the Proton acceptor of the active site.

It belongs to the class I-like SAM-binding methyltransferase superfamily. RNA methyltransferase RlmE family.

The protein localises to the cytoplasm. The enzyme catalyses uridine(2552) in 23S rRNA + S-adenosyl-L-methionine = 2'-O-methyluridine(2552) in 23S rRNA + S-adenosyl-L-homocysteine + H(+). In terms of biological role, specifically methylates the uridine in position 2552 of 23S rRNA at the 2'-O position of the ribose in the fully assembled 50S ribosomal subunit. The polypeptide is Ribosomal RNA large subunit methyltransferase E (Roseobacter denitrificans (strain ATCC 33942 / OCh 114) (Erythrobacter sp. (strain OCh 114))).